Reading from the N-terminus, the 223-residue chain is MDTMKGTTTVGLICDDAVILATDKRASMGNLIADKEAKKLYKIDDYIAMTIAGSVGDAQAIVRALIAEARLYKMRTGKNISPRACATLLSNILHSSRMFPFLTQIIIGGYDLTDGPKLFSLDPLGGMNEEKTFTSTGSGSPIAYGVLEAEYDRDMSIEEGLKLALKALKSAMERDTYSGNGVSVAVITKEGVKLLSDEEITKLLGNDKSKTKKKSTRRRKKSK.

Positions 1 to 6 (MDTMKG) are cleaved as a propeptide — removed in mature form; by autocatalysis. The Nucleophile role is filled by T7.

Belongs to the peptidase T1B family. As to quaternary structure, the 20S proteasome core is composed of 14 alpha and 14 beta subunits that assemble into four stacked heptameric rings, resulting in a barrel-shaped structure. The two inner rings, each composed of seven catalytic beta subunits, are sandwiched by two outer rings, each composed of seven alpha subunits. The catalytic chamber with the active sites is on the inside of the barrel. Has a gated structure, the ends of the cylinder being occluded by the N-termini of the alpha-subunits. Is capped at one or both ends by the proteasome regulatory ATPase, PAN.

The protein localises to the cytoplasm. It carries out the reaction Cleavage of peptide bonds with very broad specificity.. With respect to regulation, the formation of the proteasomal ATPase PAN-20S proteasome complex, via the docking of the C-termini of PAN into the intersubunit pockets in the alpha-rings, triggers opening of the gate for substrate entry. Interconversion between the open-gate and close-gate conformations leads to a dynamic regulation of the 20S proteasome proteolysis activity. In terms of biological role, component of the proteasome core, a large protease complex with broad specificity involved in protein degradation. This Methanocaldococcus vulcanius (strain ATCC 700851 / DSM 12094 / M7) (Methanococcus vulcanius) protein is Proteasome subunit beta.